The sequence spans 319 residues: Acetyl esterase (319 aa).

The Involved in the stabilization of the negatively charged intermediate by the formation of the oxyanion hole motif lies at 91–93 (HGG). Catalysis depends on residues Ser-165, Asp-262, and His-292.

The protein belongs to the 'GDXG' lipolytic enzyme family. In terms of assembly, homodimer. Interacts with MalT and MelA.

It is found in the cytoplasm. Its function is as follows. Displays esterase activity towards short chain fatty esters (acyl chain length of up to 8 carbons). Able to hydrolyze triacetylglycerol (triacetin) and tributyrylglycerol (tributyrin), but not trioleylglycerol (triolein) or cholesterol oleate. Negatively regulates MalT activity by antagonizing maltotriose binding. Inhibits MelA galactosidase activity. The polypeptide is Acetyl esterase (Shigella flexneri serotype 5b (strain 8401)).